We begin with the raw amino-acid sequence, 1270 residues long: Myosin-3 (1270 aa).

The segment at 1–20 (MAVIKKGARRKDVKEPKKRS) is disordered. In terms of domain architecture, Myosin motor spans 36-715 (VGVSDLTLLS…SLFALEDMRD (680 aa)). 129 to 136 (GESGAGKT) lines the ATP pocket. Position 357 is a phosphoserine (Ser-357). The actin-binding stretch occupies residues 404–486 (SIGILDIYGF…PGILAAMNDS (83 aa)). 2 IQ domains span residues 719–739 (YNMA…RIDA) and 740–765 (AIKI…YGTK). Residues 771 to 961 (KERRSMSLLG…TIYVRRGHPA (191 aa)) form the TH1 domain. Disordered stretches follow at residues 951–1015 (STIY…QKPV), 1029–1136 (YNPK…GSSS), and 1215–1270 (VQFG…DDDW). The span at 980–1000 (IKSKKSKHKSTHKHTHSHRSH) shows a compositional bias: basic residues. Positions 1066-1078 (KKASSSHKSSSAK) are enriched in low complexity. A compositionally biased stretch (basic and acidic residues) spans 1089-1098 (GVEKNKEPLK). The span at 1107 to 1116 (PIPPPPPPMG) shows a compositional bias: pro residues. Positions 1118-1180 (PKDPKFEAAY…PTAYMTPYKD (63 aa)) constitute an SH3 domain. Residues 1215-1234 (VQFGSATVGPTSDNQSNPVG) are compositionally biased toward polar residues. The segment covering 1256–1270 (ADDDDNDDGDDDDDW) has biased composition (acidic residues).

It belongs to the TRAFAC class myosin-kinesin ATPase superfamily. Myosin family. Interacts (via myosin motor domain) with SHE4; this interaction is important for proper localization and may regulate the interaction of the motor domain with actin. Interacts (via SH3 domain) with VRP1; this interaction is required for localization to sites of polarized growth and may regulate the interaction of the tail domain with actin. Interacts (via SH3 domain) with PAN1; this interaction is important for late stages of endocytopsis. Interacts (via SH3 domain) with BBC1 and LAS17. Interacts (via C-terminal acidic tail) with ARC19 and ARC40; ARC19 and ARC40 are Arp2/3 complex subunits. Post-translationally, phosphorylation of the TEDS site (Ser-357) is required for the polarization of the actin cytoskeleton and for ligand-induced, but not for constitutive internalization of STE2. Phosphorylation probably activates the myosin-I ATPase. Ser-357 is phosphorylated by CLA4 and STE20 in vitro.

Its subcellular location is the cytoplasm. It is found in the cytoskeleton. The protein localises to the actin patch. Functionally, one of two redundant type-I myosins implicated in the organization of the actin cytoskeleton. Required for proper actin cytoskeleton polarization and for the internalization step in endocytosis. At the cell cortex, assembles in patch-like structures together with proteins from the actin-polymerizing machinery and promotes actin assembly. Functions redundantly with LAS17 as actin nucleation-promoting factor (NPF) for the Arp2/3 complex. Motor domain phosphorylation by PAK kinases CLA4 and STE20 promotes CDC42-regulated actin assembly. Functions together with the NPF PAN1 in late stages of endocytosis. Motor domain phosphorylation by PDK1 kinases PKH1 and PKH2, and by SGK kinases YPK1 and YPK2, promotes ligand-induced, but not constitutive endocytosis of the G protein-coupled receptor STE2. The polypeptide is Myosin-3 (MYO3) (Saccharomyces cerevisiae (strain YJM789) (Baker's yeast)).